We begin with the raw amino-acid sequence, 536 residues long: Hydroxylamine oxidoreductase (536 aa).

Residues methionine 1–alanine 26 form the signal peptide. 22 residues coordinate heme c: cysteine 116, cysteine 119, histidine 120, histidine 136, cysteine 160, cysteine 163, histidine 164, histidine 168, cysteine 179, cysteine 182, histidine 183, histidine 198, cysteine 223, cysteine 226, histidine 227, cysteine 234, cysteine 237, histidine 238, histidine 241, cysteine 254, cysteine 257, and histidine 258. Histidine 263 contacts hydroxylamine. The heme c site is built by histidine 274, cysteine 301, cysteine 304, histidine 305, histidine 311, cysteine 346, cysteine 349, histidine 350, histidine 443, and tyrosine 451.

In terms of assembly, homotrimer; subunits are linked by two covalent bonds between Tyr-451 of one subunit and heme P460 of an adjacent subunit. Requires heme c as cofactor.

It localises to the anammoxosome. It catalyses the reaction hydroxylamine + 3 Fe(III)-[cytochrome c] = nitric oxide + 3 Fe(II)-[cytochrome c] + 3 H(+). Functionally, catalyzes the oxidation of hydroxylamine to nitric oxide with cytochrome c acting as an electron acceptor. Does not oxidize hydroxylamine to nitrite. Also able to catalyze the four-electron oxidation of hydrazine to N(2) in vitro with reduced efficiency; however, this reaction is probably not physiological. The protein is Hydroxylamine oxidoreductase of Kuenenia stuttgartiensis.